A 257-amino-acid polypeptide reads, in one-letter code: Imidazole glycerol phosphate synthase subunit HisF (257 aa).

Residues Asp-11 and Asp-130 contribute to the active site.

The protein belongs to the HisA/HisF family. As to quaternary structure, heterodimer of HisH and HisF.

It localises to the cytoplasm. The catalysed reaction is 5-[(5-phospho-1-deoxy-D-ribulos-1-ylimino)methylamino]-1-(5-phospho-beta-D-ribosyl)imidazole-4-carboxamide + L-glutamine = D-erythro-1-(imidazol-4-yl)glycerol 3-phosphate + 5-amino-1-(5-phospho-beta-D-ribosyl)imidazole-4-carboxamide + L-glutamate + H(+). It participates in amino-acid biosynthesis; L-histidine biosynthesis; L-histidine from 5-phospho-alpha-D-ribose 1-diphosphate: step 5/9. Functionally, IGPS catalyzes the conversion of PRFAR and glutamine to IGP, AICAR and glutamate. The HisF subunit catalyzes the cyclization activity that produces IGP and AICAR from PRFAR using the ammonia provided by the HisH subunit. The protein is Imidazole glycerol phosphate synthase subunit HisF of Prochlorococcus marinus (strain SARG / CCMP1375 / SS120).